We begin with the raw amino-acid sequence, 95 residues long: Small ubiquitin-related modifier 2-A (95 aa).

Lys11 participates in a covalent cross-link: Glycyl lysine isopeptide (Lys-Gly) (interchain with G-Cter in SUMO). Residues 16–95 (DHINLKVAGQ…VFQQQTGGSF (80 aa)) form the Ubiquitin-like domain. Gly93 participates in a covalent cross-link: Glycyl lysine isopeptide (Gly-Lys) (interchain with K-? in acceptor proteins). Positions 94-95 (SF) are excised as a propeptide.

The protein belongs to the ubiquitin family. SUMO subfamily. In terms of assembly, interacts with sae2 and ube2i. Covalently attached to a number of proteins, including top2. Post-translationally, polymeric chains can be formed through Lys-11 cross-linking. Cleavage of precursor form by a sentrin-specific protease is necessary for function.

Its subcellular location is the nucleus. Ubiquitin-like protein that can be covalently attached to proteins as a monomer or as a lysine-linked polymer. Covalent attachment via an isopeptide bond to its substrates requires prior activation by the E1 complex sae1-sae2 and linkage to the E2 enzyme ube2i, and can be promoted by an E3 ligase such as pias1-4. This post-translational modification on lysine residues of proteins plays a crucial role in a number of cellular processes such as nuclear transport, DNA replication and repair, mitosis and signal transduction. Polymeric sumo2 chains are also susceptible to polyubiquitination which functions as a signal for proteasomal degradation of modified proteins. This is Small ubiquitin-related modifier 2-A (sumo2-a) from Xenopus laevis (African clawed frog).